A 370-amino-acid chain; its full sequence is Dual-specificity RNA methyltransferase RlmN (370 aa).

The Proton acceptor role is filled by E93. The Radical SAM core domain maps to 99–337; sequence EEGRGTLCVS…VTTVRKTRGD (239 aa). C106 and C343 form a disulfide bridge. The [4Fe-4S] cluster site is built by C113, C117, and C120. Residues 167–168, S199, 221–223, and N300 contribute to the S-adenosyl-L-methionine site; these read GE and SLH. Catalysis depends on C343, which acts as the S-methylcysteine intermediate.

This sequence belongs to the radical SAM superfamily. RlmN family. [4Fe-4S] cluster is required as a cofactor.

Its subcellular location is the cytoplasm. It carries out the reaction adenosine(2503) in 23S rRNA + 2 reduced [2Fe-2S]-[ferredoxin] + 2 S-adenosyl-L-methionine = 2-methyladenosine(2503) in 23S rRNA + 5'-deoxyadenosine + L-methionine + 2 oxidized [2Fe-2S]-[ferredoxin] + S-adenosyl-L-homocysteine. It catalyses the reaction adenosine(37) in tRNA + 2 reduced [2Fe-2S]-[ferredoxin] + 2 S-adenosyl-L-methionine = 2-methyladenosine(37) in tRNA + 5'-deoxyadenosine + L-methionine + 2 oxidized [2Fe-2S]-[ferredoxin] + S-adenosyl-L-homocysteine. Functionally, specifically methylates position 2 of adenine 2503 in 23S rRNA and position 2 of adenine 37 in tRNAs. m2A2503 modification seems to play a crucial role in the proofreading step occurring at the peptidyl transferase center and thus would serve to optimize ribosomal fidelity. The chain is Dual-specificity RNA methyltransferase RlmN from Francisella tularensis subsp. novicida (strain U112).